Here is a 192-residue protein sequence, read N- to C-terminus: Large ribosomal subunit protein uL10 (192 aa).

It belongs to the universal ribosomal protein uL10 family. Part of the ribosomal stalk of the 50S ribosomal subunit. The N-terminus interacts with L11 and the large rRNA to form the base of the stalk. The C-terminus forms an elongated spine to which L12 dimers bind in a sequential fashion forming a multimeric L10(L12)X complex.

Forms part of the ribosomal stalk, playing a central role in the interaction of the ribosome with GTP-bound translation factors. In Gloeobacter violaceus (strain ATCC 29082 / PCC 7421), this protein is Large ribosomal subunit protein uL10.